A 341-amino-acid chain; its full sequence is Phosphoribosylaminoimidazole-succinocarboxamide synthase, chloroplastic (341 aa).

This sequence belongs to the SAICAR synthetase family.

Its subcellular location is the plastid. It is found in the chloroplast. The enzyme catalyses 5-amino-1-(5-phospho-D-ribosyl)imidazole-4-carboxylate + L-aspartate + ATP = (2S)-2-[5-amino-1-(5-phospho-beta-D-ribosyl)imidazole-4-carboxamido]succinate + ADP + phosphate + 2 H(+). It functions in the pathway purine metabolism; IMP biosynthesis via de novo pathway; 5-amino-1-(5-phospho-D-ribosyl)imidazole-4-carboxamide from 5-amino-1-(5-phospho-D-ribosyl)imidazole-4-carboxylate: step 1/2. The sequence is that of Phosphoribosylaminoimidazole-succinocarboxamide synthase, chloroplastic (PUR7) from Vigna aconitifolia (Moth bean).